We begin with the raw amino-acid sequence, 321 residues long: Probable transaldolase (321 aa).

Lys133 serves as the catalytic Schiff-base intermediate with substrate.

This sequence belongs to the transaldolase family. Type 1 subfamily. Homodimer.

The protein localises to the cytoplasm. It catalyses the reaction D-sedoheptulose 7-phosphate + D-glyceraldehyde 3-phosphate = D-erythrose 4-phosphate + beta-D-fructose 6-phosphate. It functions in the pathway carbohydrate degradation; pentose phosphate pathway; D-glyceraldehyde 3-phosphate and beta-D-fructose 6-phosphate from D-ribose 5-phosphate and D-xylulose 5-phosphate (non-oxidative stage): step 2/3. In terms of biological role, transaldolase is important for the balance of metabolites in the pentose-phosphate pathway. This is Probable transaldolase (tal) from Dictyostelium discoideum (Social amoeba).